The chain runs to 236 residues: CBS domain-containing protein CBSX1, chloroplastic (236 aa).

Residues methionine 1–proline 53 constitute a chloroplast transit peptide. The segment at proline 47–asparagine 66 is disordered. An N-acetylserine modification is found at serine 54. CBS domains are found at residues methionine 81–glutamate 142 and methionine 175–serine 231.

The protein resides in the plastid. Its subcellular location is the chloroplast. This is CBS domain-containing protein CBSX1, chloroplastic (CBSX1) from Arabidopsis thaliana (Mouse-ear cress).